A 101-amino-acid chain; its full sequence is MAKKSAIEKNNRRKALAARYAAKRAQLKAAAMDENLSLEERFKARLKLAELPRNSAPNRVRNRCEITGRPRAFYRKLKMSRIALREYGSRGQVPGLVKSSW.

It belongs to the universal ribosomal protein uS14 family. In terms of assembly, part of the 30S ribosomal subunit. Contacts proteins S3 and S10.

Functionally, binds 16S rRNA, required for the assembly of 30S particles and may also be responsible for determining the conformation of the 16S rRNA at the A site. In Hyphomonas neptunium (strain ATCC 15444), this protein is Small ribosomal subunit protein uS14.